We begin with the raw amino-acid sequence, 378 residues long: Ribosomal RNA large subunit methyltransferase G (378 aa).

Belongs to the methyltransferase superfamily. RlmG family.

The protein resides in the cytoplasm. It carries out the reaction guanosine(1835) in 23S rRNA + S-adenosyl-L-methionine = N(2)-methylguanosine(1835) in 23S rRNA + S-adenosyl-L-homocysteine + H(+). Functionally, specifically methylates the guanine in position 1835 (m2G1835) of 23S rRNA. The sequence is that of Ribosomal RNA large subunit methyltransferase G from Salmonella gallinarum (strain 287/91 / NCTC 13346).